The primary structure comprises 254 residues: Very-long-chain (3R)-3-hydroxyacyl-CoA dehydratase 2 (254 aa).

Low complexity predominate over residues 1-10; the sequence is MAAAAATAAT. Residues 1–34 form a disordered region; the sequence is MAAAAATAATKGNGGGSGRVGAGDSSGARKKKGP. Ala2 carries the post-translational modification N-acetylalanine. Residues 2–41 are Cytoplasmic-facing; the sequence is AAAAATAATKGNGGGSGRVGAGDSSGARKKKGPGPVATAY. Positions 12-21 are enriched in gly residues; that stretch reads GNGGGSGRVG. Residues 42–60 form a helical membrane-spanning segment; sequence LVIYNVVMTAGWLVIAVGL. Residues 61-79 lie on the Lumenal side of the membrane; sequence VRAYLAKGSYHSLYYSIER. Residues 80–97 form a helical membrane-spanning segment; sequence PLKFFQTGALLEILHCAI. At 98–107 the chain is on the cytoplasmic side; it reads GIVPSSVVLT. A helical transmembrane segment spans residues 108–125; it reads SFQVMSRVFLIWAVTHSV. Residues 126 to 130 lie on the Lumenal side of the membrane; the sequence is KEVQS. Residues 131-146 traverse the membrane as a helical segment; sequence EDSVLLFVIAWTITEI. At 147-169 the chain is on the cytoplasmic side; the sequence is IRYSFYTFSLLNHLPYIIKWARY. Residues 170-187 traverse the membrane as a helical segment; sequence TLFIVLYPMGVTGELLTI. Catalysis depends on residues Tyr176 and Glu183. Topologically, residues 188 to 217 are lumenal; that stretch reads YAALPFVRQAGLYSISLPNKYNFSFDYHAF. A may be involved in interaction with TECR region spans residues 198–214; sequence GLYSISLPNKYNFSFDY. A glycan (N-linked (GlcNAc...) asparagine) is linked at Asn209. Residues 218–235 traverse the membrane as a helical segment; sequence LILIMISYIPLFPQLYFH. The Cytoplasmic portion of the chain corresponds to 236 to 254; sequence MIHQRRKVLSHTEEHKKFE.

Belongs to the very long-chain fatty acids dehydratase HACD family. As to quaternary structure, may interact with enzymes of the ELO family (including ELOVL1); with those enzymes that mediate condensation, the first of the four steps of the reaction cycle responsible for fatty acids elongation, may be part of a larger fatty acids elongase complex. Interacts with BCAP31. Interacts with TECR.

It localises to the endoplasmic reticulum membrane. The enzyme catalyses a very-long-chain (3R)-3-hydroxyacyl-CoA = a very-long-chain (2E)-enoyl-CoA + H2O. The catalysed reaction is (3R)-hydroxyhexadecanoyl-CoA = (2E)-hexadecenoyl-CoA + H2O. It catalyses the reaction (3R)-hydroxyoctadecanoyl-CoA = (2E)-octadecenoyl-CoA + H2O. It carries out the reaction (3R)-hydroxyeicosanoyl-CoA = (2E)-eicosenoyl-CoA + H2O. The enzyme catalyses (3R)-hydroxydocosanoyl-CoA = (2E)-docosenoyl-CoA + H2O. The catalysed reaction is (3R)-hydroxytetracosanoyl-CoA = (2E)-tetracosenoyl-CoA + H2O. It catalyses the reaction (3R)-hydroxyhexacosanoyl-CoA = (2E)-hexacosenoyl-CoA + H2O. It participates in lipid metabolism; fatty acid biosynthesis. Catalyzes the third of the very long-chain fatty acids (VLCFA) elongation four-step cycle (condensation, reduction, dehydration, and reduction). This endoplasmic reticulum-elongation process is characterized by the addition of two carbons to the lipid chain through each cycle. This enzyme catalyzes the dehydration of the 3-hydroxyacyl-CoA intermediate into trans-2,3-enoyl-CoA, within each cycle of elongation. Therefore, it participates in the production of various VLCFAs involved in multiple biological processes as precursors of membrane lipids and lipid mediators. The polypeptide is Very-long-chain (3R)-3-hydroxyacyl-CoA dehydratase 2 (Mus musculus (Mouse)).